The chain runs to 202 residues: MPDEPTGSADPLTSTEEAGGAGEPNAPAPPRRLRMLLSVAVVVLTLDIVTKVVAVQLLPPGQPVSIIGDTVTWTLVRNSGAAFSMATGYTWVLTLIATGVVVGIFWMGRRLVSPWWALGLGMILGGAMGNLVDRFFRAPGPLRGHVVDFLSVGWWPVFNVADPSVVGGAILLVILSIFGFDFDTVGRRHADGDTVGRRKADG.

The disordered stretch occupies residues 1–29 (MPDEPTGSADPLTSTEEAGGAGEPNAPAP). The next 3 helical transmembrane spans lie at 35–55 (MLLS…VVAV), 88–108 (GYTW…FWMG), and 112–132 (VSPW…GNLV). Residues Asp-148 and Asp-162 contribute to the active site. Residues 160–180 (VADPSVVGGAILLVILSIFGF) traverse the membrane as a helical segment.

This sequence belongs to the peptidase A8 family.

Its subcellular location is the cell membrane. The enzyme catalyses Release of signal peptides from bacterial membrane prolipoproteins. Hydrolyzes -Xaa-Yaa-Zaa-|-(S,diacylglyceryl)Cys-, in which Xaa is hydrophobic (preferably Leu), and Yaa (Ala or Ser) and Zaa (Gly or Ala) have small, neutral side chains.. The protein operates within protein modification; lipoprotein biosynthesis (signal peptide cleavage). In terms of biological role, this protein specifically catalyzes the removal of signal peptides from prolipoproteins. This Mycobacterium bovis (strain ATCC BAA-935 / AF2122/97) protein is Lipoprotein signal peptidase.